A 179-amino-acid polypeptide reads, in one-letter code: Large ribosomal subunit protein uL5 (179 aa).

The protein belongs to the universal ribosomal protein uL5 family. Part of the 50S ribosomal subunit; part of the 5S rRNA/L5/L18/L25 subcomplex. Contacts the 5S rRNA and the P site tRNA. Forms a bridge to the 30S subunit in the 70S ribosome.

Functionally, this is one of the proteins that bind and probably mediate the attachment of the 5S RNA into the large ribosomal subunit, where it forms part of the central protuberance. In the 70S ribosome it contacts protein S13 of the 30S subunit (bridge B1b), connecting the 2 subunits; this bridge is implicated in subunit movement. Contacts the P site tRNA; the 5S rRNA and some of its associated proteins might help stabilize positioning of ribosome-bound tRNAs. This chain is Large ribosomal subunit protein uL5, found in Pseudoalteromonas translucida (strain TAC 125).